Consider the following 492-residue polypeptide: Bifunctional purine biosynthesis protein PurH (492 aa).

Residues 1-144 (MKKAILSVSN…KNYKHVTTIV (144 aa)) form the MGS-like domain.

It belongs to the PurH family.

It carries out the reaction (6R)-10-formyltetrahydrofolate + 5-amino-1-(5-phospho-beta-D-ribosyl)imidazole-4-carboxamide = 5-formamido-1-(5-phospho-D-ribosyl)imidazole-4-carboxamide + (6S)-5,6,7,8-tetrahydrofolate. It catalyses the reaction IMP + H2O = 5-formamido-1-(5-phospho-D-ribosyl)imidazole-4-carboxamide. The protein operates within purine metabolism; IMP biosynthesis via de novo pathway; 5-formamido-1-(5-phospho-D-ribosyl)imidazole-4-carboxamide from 5-amino-1-(5-phospho-D-ribosyl)imidazole-4-carboxamide (10-formyl THF route): step 1/1. It participates in purine metabolism; IMP biosynthesis via de novo pathway; IMP from 5-formamido-1-(5-phospho-D-ribosyl)imidazole-4-carboxamide: step 1/1. In Staphylococcus aureus (strain MRSA252), this protein is Bifunctional purine biosynthesis protein PurH.